Here is a 486-residue protein sequence, read N- to C-terminus: Cardiolipin synthase A (486 aa).

2 helical membrane passes run 3-23 (TFYT…IAGV) and 38-58 (MAWL…YLSF). PLD phosphodiesterase domains lie at 219–246 (MDLR…VDPR) and 399–426 (EDGL…DMRS). Residues His224, Lys226, Asp231, His404, Lys406, and Asp411 contribute to the active site.

This sequence belongs to the phospholipase D family. Cardiolipin synthase subfamily. ClsA sub-subfamily.

It is found in the cell inner membrane. It catalyses the reaction 2 a 1,2-diacyl-sn-glycero-3-phospho-(1'-sn-glycerol) = a cardiolipin + glycerol. Its function is as follows. Catalyzes the reversible phosphatidyl group transfer from one phosphatidylglycerol molecule to another to form cardiolipin (CL) (diphosphatidylglycerol) and glycerol. The chain is Cardiolipin synthase A from Serratia proteamaculans (strain 568).